The following is a 121-amino-acid chain: Ribonuclease P protein component (121 aa).

This sequence belongs to the RnpA family. As to quaternary structure, consists of a catalytic RNA component (M1 or rnpB) and a protein subunit.

It catalyses the reaction Endonucleolytic cleavage of RNA, removing 5'-extranucleotides from tRNA precursor.. Its function is as follows. RNaseP catalyzes the removal of the 5'-leader sequence from pre-tRNA to produce the mature 5'-terminus. It can also cleave other RNA substrates such as 4.5S RNA. The protein component plays an auxiliary but essential role in vivo by binding to the 5'-leader sequence and broadening the substrate specificity of the ribozyme. This chain is Ribonuclease P protein component, found in Chromobacterium violaceum (strain ATCC 12472 / DSM 30191 / JCM 1249 / CCUG 213 / NBRC 12614 / NCIMB 9131 / NCTC 9757 / MK).